The chain runs to 931 residues: Valine--tRNA ligase (931 aa).

The short motif at 42 to 52 is the 'HIGH' region element; it reads PNVTGSLHMGH. A 'KMSKS' region motif is present at residues 523 to 527; that stretch reads KMSKS. Lysine 526 lines the ATP pocket. Residues 859-931 adopt a coiled-coil conformation; it reads MAGLIDKEAE…EEQLEKIKYL (73 aa).

The protein belongs to the class-I aminoacyl-tRNA synthetase family. ValS type 1 subfamily. As to quaternary structure, monomer.

It localises to the cytoplasm. It carries out the reaction tRNA(Val) + L-valine + ATP = L-valyl-tRNA(Val) + AMP + diphosphate. Functionally, catalyzes the attachment of valine to tRNA(Val). As ValRS can inadvertently accommodate and process structurally similar amino acids such as threonine, to avoid such errors, it has a 'posttransfer' editing activity that hydrolyzes mischarged Thr-tRNA(Val) in a tRNA-dependent manner. This chain is Valine--tRNA ligase, found in Alcanivorax borkumensis (strain ATCC 700651 / DSM 11573 / NCIMB 13689 / SK2).